A 938-amino-acid polypeptide reads, in one-letter code: Isoleucine--tRNA ligase (938 aa).

Residues 58–68 (PYANGNIHMGH) carry the 'HIGH' region motif. Residue glutamate 566 coordinates L-isoleucyl-5'-AMP. The short motif at 607-611 (KMSKS) is the 'KMSKS' region element. Lysine 610 contacts ATP. Residues cysteine 906, cysteine 909, cysteine 926, and cysteine 929 each contribute to the Zn(2+) site.

This sequence belongs to the class-I aminoacyl-tRNA synthetase family. IleS type 1 subfamily. In terms of assembly, monomer. The cofactor is Zn(2+).

The protein localises to the cytoplasm. The catalysed reaction is tRNA(Ile) + L-isoleucine + ATP = L-isoleucyl-tRNA(Ile) + AMP + diphosphate. Functionally, catalyzes the attachment of isoleucine to tRNA(Ile). As IleRS can inadvertently accommodate and process structurally similar amino acids such as valine, to avoid such errors it has two additional distinct tRNA(Ile)-dependent editing activities. One activity is designated as 'pretransfer' editing and involves the hydrolysis of activated Val-AMP. The other activity is designated 'posttransfer' editing and involves deacylation of mischarged Val-tRNA(Ile). This chain is Isoleucine--tRNA ligase, found in Nitratidesulfovibrio vulgaris (strain DP4) (Desulfovibrio vulgaris).